Here is a 433-residue protein sequence, read N- to C-terminus: Xylose isomerase (433 aa).

Residues His99 and Asp102 contribute to the active site. Mg(2+) contacts are provided by Glu230, Glu266, His269, Asp294, Asp305, Asp307, and Asp337.

The protein belongs to the xylose isomerase family. Homotetramer. Requires Mg(2+) as cofactor.

It is found in the cytoplasm. The catalysed reaction is alpha-D-xylose = alpha-D-xylulofuranose. The protein is Xylose isomerase of Roseobacter denitrificans (strain ATCC 33942 / OCh 114) (Erythrobacter sp. (strain OCh 114)).